The chain runs to 691 residues: Histone-lysine N-methyltransferase Set8 (691 aa).

Disordered regions lie at residues 1 to 22 (MIMV…AAAA), 211 to 234 (RSGL…SATT), 345 to 381 (PAAG…GDGG), 422 to 450 (SRRR…QPTN), and 484 to 516 (APAK…ATNG). Low complexity predominate over residues 220–232 (SSHSSSSSGGASA). A compositionally biased stretch (pro residues) spans 431 to 446 (PQAPYQPQQPQPPPGT). The span at 484 to 503 (APAKPRAALTKGSKTKTGSK) shows a compositional bias: low complexity. The SET domain occupies 555 to 676 (EGLQVRNFMG…PGEELTYDYG (122 aa)). S-adenosyl-L-methionine is bound by residues 565–567 (KGR), Tyr610, and 637–638 (NH).

This sequence belongs to the class V-like SAM-binding methyltransferase superfamily. Histone-lysine methyltransferase family. PR/SET subfamily.

The protein resides in the nucleus. Its subcellular location is the chromosome. The enzyme catalyses L-lysyl(20)-[histone H4] + S-adenosyl-L-methionine = N(6)-methyl-L-lysyl(20)-[histone H4] + S-adenosyl-L-homocysteine + H(+). Functionally, histone methyltransferase that specifically monomethylates 'Lys-20' of histone H4. H4 'Lys-20' monomethylation is enriched during mitosis and represents a specific tag for epigenetic transcriptional repression. Mainly functions in euchromatin regions, thereby playing a central role in the silencing of euchromatic genes. Required for cell proliferation, possibly by contributing to the maintenance of proper higher-order structure of DNA and chromosome condensation during mitosis. This Drosophila pseudoobscura pseudoobscura (Fruit fly) protein is Histone-lysine N-methyltransferase Set8.